A 146-amino-acid chain; its full sequence is Histone H2A.1 (146 aa).

Methionine 1 is modified (N-acetylmethionine). A disordered region spans residues 1–24 (MDATKTTKGAGGRKGGPRKKSVTK). Positions 142–145 (SPKK) match the SPKK motif motif.

The protein belongs to the histone H2A family. The nucleosome is a histone octamer containing two molecules each of H2A, H2B, H3 and H4 assembled in one H3-H4 heterotetramer and two H2A-H2B heterodimers. The octamer wraps approximately 147 bp of DNA. In terms of tissue distribution, high expression in meristematic tissues, in cells of the root pericycle and in shoot cortical cells undergoing endoduplication of their DNA.

The protein resides in the nucleus. The protein localises to the chromosome. Core component of nucleosome. Nucleosomes wrap and compact DNA into chromatin, limiting DNA accessibility to the cellular machineries which require DNA as a template. Histones thereby play a central role in transcription regulation, DNA repair, DNA replication and chromosomal stability. DNA accessibility is regulated via a complex set of post-translational modifications of histones, also called histone code, and nucleosome remodeling. The polypeptide is Histone H2A.1 (Solanum lycopersicum (Tomato)).